Reading from the N-terminus, the 504-residue chain is Subtilisin-like protease 1 (504 aa).

Residues 1 to 19 (MGVFRFISISLAAVSAANA) form the signal peptide. Positions 20-116 (AQILSMPHAQ…VEPDTIVSVH (97 aa)) are excised as a propeptide. In terms of domain architecture, Inhibitor I9 spans 34–116 (SYIVMMKDDT…VEPDTIVSVH (83 aa)). Positions 126-400 (SWGLARISNP…NVLINNGGAK (275 aa)) constitute a Peptidase S8 domain. Active-site charge relay system residues include aspartate 158 and histidine 190. Positions 172–198 (AIWGSNQVNDGDDRDGSGHGTHTSGTM) are disordered. Asparagine 233 and asparagine 251 each carry an N-linked (GlcNAc...) asparagine glycan. Positions 282–294 (NDNQDAQSSSPAS) are enriched in polar residues. The disordered stretch occupies residues 282-312 (NDNQDAQSSSPASEPSVCTVGSSAEDDSRSS). The Charge relay system role is filled by serine 345. Polar residues predominate over residues 378–394 (TSSITDAGPGTPTNVLI). Residues 378–483 (TSSITDAGPG…YPGGDNFDFD (106 aa)) form a disordered region. 2 stretches are compositionally biased toward pro residues: residues 405 to 449 (NPNP…PGQP) and 457 to 473 (APAP…PHTP).

This sequence belongs to the peptidase S8 family.

Its subcellular location is the secreted. In terms of biological role, secreted subtilisin-like serine protease with keratinolytic activity that contributes to pathogenicity. The chain is Subtilisin-like protease 1 (SUB1) from Trichophyton rubrum (Athlete's foot fungus).